Here is a 258-residue protein sequence, read N- to C-terminus: Putative [LysW]-aminoadipate/[LysW]-glutamate kinase (258 aa).

Residues 33–34 (GG), Arg-60, and Asn-164 contribute to the substrate site.

The protein belongs to the acetylglutamate kinase family. LysZ subfamily.

It localises to the cytoplasm. The enzyme catalyses [amino-group carrier protein]-C-terminal-N-(1,4-dicarboxybutan-1-yl)-L-glutamine + ATP = [amino-group carrier protein]-C-terminal-N-(1-carboxy-5-phosphooxy-5-oxopentan-1-yl)-L-glutamine + ADP. It carries out the reaction [amino-group carrier protein]-C-terminal-gamma-(L-glutamyl)-L-glutamate + ATP = [amino-group carrier protein]-C-terminal-gamma-(5-phospho-L-glutamyl)-L-glutamate + ADP. The protein operates within amino-acid biosynthesis; L-lysine biosynthesis via AAA pathway; L-lysine from L-alpha-aminoadipate (Thermus route): step 2/5. It functions in the pathway amino-acid biosynthesis; L-arginine biosynthesis. In terms of biological role, involved in both the arginine and lysine biosynthetic pathways. Phosphorylates the LysW-bound precursors glutamate (for arginine biosynthesis), respectively alpha-aminoadipate (for lysine biosynthesis). This is Putative [LysW]-aminoadipate/[LysW]-glutamate kinase from Caldivirga maquilingensis (strain ATCC 700844 / DSM 13496 / JCM 10307 / IC-167).